A 132-amino-acid chain; its full sequence is Small ribosomal subunit protein uS8c (132 aa).

Belongs to the universal ribosomal protein uS8 family. As to quaternary structure, part of the 30S ribosomal subunit.

The protein localises to the plastid. The protein resides in the chloroplast. In terms of biological role, one of the primary rRNA binding proteins, it binds directly to 16S rRNA central domain where it helps coordinate assembly of the platform of the 30S subunit. This Liriodendron tulipifera (Tuliptree) protein is Small ribosomal subunit protein uS8c (rps8).